A 47-amino-acid polypeptide reads, in one-letter code: Photosystem II reaction center protein K (47 aa).

Residues 1–10 (MAAFSLDLLA) constitute a propeptide that is removed on maturation. A helical transmembrane segment spans residues 19 to 39 (FGPLIDILPIIPVFFLLLAFV).

This sequence belongs to the PsbK family. As to quaternary structure, PSII is composed of 1 copy each of membrane proteins PsbA, PsbB, PsbC, PsbD, PsbE, PsbF, PsbH, PsbI, PsbJ, PsbK, PsbL, PsbM, PsbT, PsbX, PsbY, PsbZ, Psb30/Ycf12, peripheral proteins PsbO, CyanoQ (PsbQ), PsbU, PsbV and a large number of cofactors. It forms dimeric complexes.

It localises to the cellular thylakoid membrane. Its function is as follows. One of the components of the core complex of photosystem II (PSII). PSII is a light-driven water:plastoquinone oxidoreductase that uses light energy to abstract electrons from H(2)O, generating O(2) and a proton gradient subsequently used for ATP formation. It consists of a core antenna complex that captures photons, and an electron transfer chain that converts photonic excitation into a charge separation. This Synechococcus sp. (strain WH7803) protein is Photosystem II reaction center protein K.